Reading from the N-terminus, the 193-residue chain is Nucleoside triphosphate pyrophosphatase (193 aa).

The Proton acceptor role is filled by Asp-70.

This sequence belongs to the Maf family. Requires a divalent metal cation as cofactor.

Its subcellular location is the cytoplasm. It carries out the reaction a ribonucleoside 5'-triphosphate + H2O = a ribonucleoside 5'-phosphate + diphosphate + H(+). The catalysed reaction is a 2'-deoxyribonucleoside 5'-triphosphate + H2O = a 2'-deoxyribonucleoside 5'-phosphate + diphosphate + H(+). In terms of biological role, nucleoside triphosphate pyrophosphatase. May have a dual role in cell division arrest and in preventing the incorporation of modified nucleotides into cellular nucleic acids. This Anaplasma phagocytophilum (strain HZ) protein is Nucleoside triphosphate pyrophosphatase.